A 335-amino-acid polypeptide reads, in one-letter code: Methionine import ATP-binding protein MetN 2 (335 aa).

One can recognise an ABC transporter domain in the interval I2–V242. G38–S45 contributes to the ATP binding site.

Belongs to the ABC transporter superfamily. Methionine importer (TC 3.A.1.24) family. In terms of assembly, the complex is composed of two ATP-binding proteins (MetN), two transmembrane proteins (MetI) and a solute-binding protein (MetQ).

Its subcellular location is the cell inner membrane. It carries out the reaction L-methionine(out) + ATP + H2O = L-methionine(in) + ADP + phosphate + H(+). It catalyses the reaction D-methionine(out) + ATP + H2O = D-methionine(in) + ADP + phosphate + H(+). Functionally, part of the ABC transporter complex MetNIQ involved in methionine import. Responsible for energy coupling to the transport system. This chain is Methionine import ATP-binding protein MetN 2, found in Pseudomonas aeruginosa (strain UCBPP-PA14).